Consider the following 359-residue polypeptide: MSYRRELEKYRDLDEDEILGGLTEEELRTLENELDELDPDNALLPAGLRQKDQTTKAPTGPFRREELLDHLEKQAKEFKDREDLVPYTGEKRGKVWVPKQKPMDPVLESVTLEPELEEALANASDAELCDIAAILGMHTLMSNQQYYQALGSSSIVNKEGLNSVIKPTQYKPVPDEEPNATDVEETLERIKNNDPKLEEVNLNNIRNIPIPTLKAYAEALKENSYVKKFSIVGTRSNDPVAFALAEMLKVNKVLKTLNVESNFISGAGILRLVEALPYNTSLVELKIDNQSQPLGNKVEMEIVSMLEKNATLLKFGYHFTQQGPRLRASNAMMNNNDLVRKRRLADLTGPIIPKCRSGV.

A disordered region spans residues 39-61 (PDNALLPAGLRQKDQTTKAPTGP). The interval 39-138 (PDNALLPAGL…CDIAAILGMH (100 aa)) is tropomyosin-binding.

This sequence belongs to the tropomodulin family. In terms of assembly, binds to the N-terminus of tropomyosin and to actin. Interacts with FLII.

It localises to the cytoplasm. The protein resides in the cytoskeleton. In terms of biological role, blocks the elongation and depolymerization of the actin filaments at the pointed end. The Tmod/TM complex contributes to the formation of the short actin protofilament, which in turn defines the geometry of the membrane skeleton. May play an important role in regulating the organization of actin filaments by preferentially binding to a specific tropomyosin isoform at its N-terminus. This is Tropomodulin-1 (TMOD1) from Bos taurus (Bovine).